The following is a 165-amino-acid chain: Myosin regulatory light chain 2B, cardiac muscle isoform (165 aa).

The residue at position 2 (Ala-2) is a N,N,N-trimethylalanine. EF-hand domains are found at residues 23–58 (TQIQ…LGRL), 93–128 (DPEE…QEGR), and 129–164 (FSQE…GEEK). Ca(2+) is bound by residues Asp-36, Asn-38, Asp-40, and Asp-47.

As to quaternary structure, myosin is a hexamer of 2 heavy chains and 4 light chains. Post-translationally, the N-terminus is blocked. N,N,N-trimethylalanine, found in other myosin light chains would not have been detected in the N-terminal tryptic peptide in PubMed:7319048 because it would remain trimethylated and ninhydrin negative after hydrolysis.

This is Myosin regulatory light chain 2B, cardiac muscle isoform from Gallus gallus (Chicken).